The following is a 249-amino-acid chain: MSLFTSLPFLLLTAVTASCADTETENCENIRKTCPVIACGPPGINGIPGKDGRDGAKGEKGEPGQGLRGSQGPPGKMGPQGTPGIPGIPGPIGQKGDPGENMGDYIRLATSERATLQSELNQIKNWLIFSLGKRVGKKAFFTNGKKMPFNEVKTLCAQFQGRVATPMNAEENRALKDLVTEEAFLGITDQETEGKFVDLTGKGVTYQNWNDGEPNNASPGEHCVTLLSDGTWNDIACSASFLTVCEFSL.

The signal sequence occupies residues 1–20 (MSLFTSLPFLLLTAVTASCA). The 59-residue stretch at 43–101 (GINGIPGKDGRDGAKGEKGEPGQGLRGSQGPPGKMGPQGTPGIPGIPGPIGQKGDPGEN) folds into the Collagen-like domain. Residues 43-103 (GINGIPGKDG…QKGDPGENMG (61 aa)) form a disordered region. P48 is subject to 4-hydroxyproline. A compositionally biased stretch (basic and acidic residues) spans 50–62 (KDGRDGAKGEKGE). 4-hydroxyproline is present on residues P63, P74, P83, and P86. Over residues 79–95 (PQGTPGIPGIPGPIGQK) the composition is skewed to low complexity. Residues 113–131 (RATLQSELNQIKNWLIFSL) are a coiled coil. A C-type lectin domain is found at 135 to 246 (VGKKAFFTNG…CSASFLTVCE (112 aa)). Cystine bridges form between C156-C245 and C223-C237.

Oligomeric complex of 3 or more homotrimers. Interacts with MASP1 and MASP2. Interacts with MEP1A and MEP1B and may inhibit their catalytic activity. In terms of processing, hydroxylation on proline residues within the sequence motif, GXPG, is most likely to be 4-hydroxy as this fits the requirement for 4-hydroxylation in vertebrates.

It is found in the secreted. Calcium-dependent lectin involved in innate immune defense. Binds mannose, fucose and N-acetylglucosamine on different microorganisms and activates the lectin complement pathway. Binds to late apoptotic cells, as well as to apoptotic blebs and to necrotic cells, but not to early apoptotic cells, facilitating their uptake by macrophages. In Bos taurus (Bovine), this protein is Mannose-binding protein C (MBL).